The primary structure comprises 499 residues: Protein phosphatase PP2A 55 kDa regulatory subunit (499 aa).

The disordered stretch occupies residues 1 to 30 (MGRWGRQSPVLEPPDPQMQTTPPPPTLPPR). A compositionally biased stretch (pro residues) spans 11–28 (LEPPDPQMQTTPPPPTLP). 7 WD repeats span residues 79 to 118 (TDAD…KAAN), 144 to 185 (EIEE…KSFG), 228 to 266 (AHTY…QSYN), 277 to 317 (ELTE…LCDR), 336 to 374 (EIIS…KPIE), 391 to 432 (ENDC…DVTL), and 467 to 498 (DFNK…FQDK).

This sequence belongs to the phosphatase 2A regulatory subunit B family. In terms of assembly, PP2A exists in several trimeric forms, all of which consist of a core composed of a catalytic subunit associated with a 65 kDa regulatory subunit (PR65) (subunit A). The core complex associates with a third, variable subunit (subunit B), which confers distinct properties to the holoenzyme.

Its function is as follows. Could perform a substrate recognition function or could be responsible for targeting the enzyme complex to the appropriate subcellular compartment. In Drosophila melanogaster (Fruit fly), this protein is Protein phosphatase PP2A 55 kDa regulatory subunit (tws).